Consider the following 93-residue polypeptide: Small ribosomal subunit protein uS19 (93 aa).

It belongs to the universal ribosomal protein uS19 family.

In terms of biological role, protein S19 forms a complex with S13 that binds strongly to the 16S ribosomal RNA. The sequence is that of Small ribosomal subunit protein uS19 from Limosilactobacillus fermentum (strain NBRC 3956 / LMG 18251) (Lactobacillus fermentum).